A 227-amino-acid polypeptide reads, in one-letter code: Orotate phosphoribosyltransferase (227 aa).

Lys-26 is a binding site for 5-phospho-alpha-D-ribose 1-diphosphate. Orotate is bound at residue 34 to 35 (FF). Residues 72–73 (YK), Arg-98, Lys-99, Lys-102, His-104, and 123–131 (DDVVSAGLS) contribute to the 5-phospho-alpha-D-ribose 1-diphosphate site. Orotate contacts are provided by Ser-127 and Arg-155.

Belongs to the purine/pyrimidine phosphoribosyltransferase family. PyrE subfamily. As to quaternary structure, homodimer. It depends on Mg(2+) as a cofactor.

The enzyme catalyses orotidine 5'-phosphate + diphosphate = orotate + 5-phospho-alpha-D-ribose 1-diphosphate. The protein operates within pyrimidine metabolism; UMP biosynthesis via de novo pathway; UMP from orotate: step 1/2. In terms of biological role, catalyzes the transfer of a ribosyl phosphate group from 5-phosphoribose 1-diphosphate to orotate, leading to the formation of orotidine monophosphate (OMP). This chain is Orotate phosphoribosyltransferase, found in Nitrosomonas europaea (strain ATCC 19718 / CIP 103999 / KCTC 2705 / NBRC 14298).